Reading from the N-terminus, the 404-residue chain is ATP phosphoribosyltransferase regulatory subunit (404 aa).

Belongs to the class-II aminoacyl-tRNA synthetase family. HisZ subfamily. Heteromultimer composed of HisG and HisZ subunits.

It localises to the cytoplasm. The protein operates within amino-acid biosynthesis; L-histidine biosynthesis; L-histidine from 5-phospho-alpha-D-ribose 1-diphosphate: step 1/9. In terms of biological role, required for the first step of histidine biosynthesis. May allow the feedback regulation of ATP phosphoribosyltransferase activity by histidine. This Picosynechococcus sp. (strain ATCC 27264 / PCC 7002 / PR-6) (Agmenellum quadruplicatum) protein is ATP phosphoribosyltransferase regulatory subunit.